Reading from the N-terminus, the 856-residue chain is Rod cGMP-specific 3',5'-cyclic phosphodiesterase subunit beta (856 aa).

At S2 the chain carries N-acetylserine. 2 GAF domains span residues 71-220 and 252-429; these read NMER…TLNL and DIER…GWSV. A PDEase domain is found at 481 to 814; the sequence is EEDELGILLK…KEWKALADEY (334 aa). H557 acts as the Proton donor in catalysis. Positions 561, 597, 598, and 718 each coordinate a divalent metal cation. Basic and acidic residues predominate over residues 823–833; it reads EEKQQQEDRTT. A disordered region spans residues 823–842; sequence EEKQQQEDRTTAKKAGTEIC. C853 carries S-geranylgeranyl cysteine lipidation. A propeptide spans 854–856 (removed in mature form); that stretch reads CIL.

This sequence belongs to the cyclic nucleotide phosphodiesterase family. In terms of assembly, oligomer composed of two catalytic chains (alpha and beta), an inhibitory chain (gamma) and the delta chain. The cofactor is a divalent metal cation.

It is found in the membrane. The protein resides in the cell projection. Its subcellular location is the cilium. The protein localises to the photoreceptor outer segment. It catalyses the reaction 3',5'-cyclic GMP + H2O = GMP + H(+). Its function is as follows. Rod-specific cGMP phosphodiesterase that catalyzes the hydrolysis of 3',5'-cyclic GMP. Necessary for the formation of a functional phosphodiesterase holoenzyme. Involved in retinal circadian rhythm photoentrainment via modulation of UVA and orange light-induced phase-shift of the retina clock. May participate in processes of transmission and amplification of the visual signal. This chain is Rod cGMP-specific 3',5'-cyclic phosphodiesterase subunit beta, found in Canis lupus familiaris (Dog).